A 130-amino-acid polypeptide reads, in one-letter code: Small ribosomal subunit protein uS11c (130 aa).

This sequence belongs to the universal ribosomal protein uS11 family. As to quaternary structure, part of the 30S ribosomal subunit.

The protein resides in the plastid. It localises to the chloroplast. The protein is Small ribosomal subunit protein uS11c of Pinus thunbergii (Japanese black pine).